We begin with the raw amino-acid sequence, 512 residues long: Gamma-aminobutyric acid receptor subunit beta-2 (512 aa).

The N-terminal stretch at 1–25 is a signal peptide; the sequence is MWRVRKRGYFGIWSFPLIIAAVCAQ. At 26–244 the chain is on the extracellular side; the sequence is SVNDPSNMSL…SFKLKRNIGY (219 aa). Asparagine 32 and asparagine 104 each carry an N-linked (GlcNAc...) asparagine glycan. Position 121 (tyrosine 121) interacts with histamine. A disulfide bond links cysteine 160 and cysteine 174. A glycan (N-linked (GlcNAc...) asparagine) is linked at asparagine 173. Histamine contacts are provided by residues 180–181 and threonine 226; that span reads SY. 4-aminobutanoate contacts are provided by tyrosine 181 and threonine 226. A run of 3 helical transmembrane segments spans residues 245–266, 270–292, and 304–326; these read FILQTYMPSILITILSWVSFWI, ASAARVALGITTVLTMTTINTHL, and AIDMYLMGCFVFVFMALLEYALV. Residues 327–489 lie on the Cytoplasmic side of the membrane; it reads NYIFFGRGPQ…DLTDVNAIDR (163 aa). Tyrosine 441 carries the post-translational modification Phosphotyrosine. The chain crosses the membrane as a helical span at residues 490–511; that stretch reads WSRIFFPVVFSFFNIVYWLYYV.

It belongs to the ligand-gated ion channel (TC 1.A.9) family. Gamma-aminobutyric acid receptor (TC 1.A.9.5) subfamily. GABRB2 sub-subfamily. Heteropentamer, formed by a combination of alpha (GABRA1-6), beta (GABRB1-3), gamma (GABRG1-3), delta (GABRD), epsilon (GABRE), rho (GABRR1-3), pi (GABRP) and theta (GABRQ) chains, each subunit exhibiting distinct physiological and pharmacological properties. Interacts with UBQLN1. May interact with KIF21B. Identified in a complex of 720 kDa composed of LHFPL4, NLGN2, GABRA1, GABRB2, GABRG2 and GABRB3. In terms of processing, glycosylated.

It is found in the postsynaptic cell membrane. The protein localises to the cell membrane. The protein resides in the cytoplasmic vesicle. The catalysed reaction is chloride(in) = chloride(out). Allosterically activated by benzodiazepines and the anesthetic etomidate. Inhibited by the antagonist bicuculline. Potentiated by histamine. Its function is as follows. Beta subunit of the heteropentameric ligand-gated chloride channel gated by gamma-aminobutyric acid (GABA), a major inhibitory neurotransmitter in the brain. GABA-gated chloride channels, also named GABA(A) receptors (GABAAR), consist of five subunits arranged around a central pore and contain GABA active binding site(s) located at the alpha and beta subunit interface(s). When activated by GABA, GABAARs selectively allow the flow of chloride anions across the cell membrane down their electrochemical gradient. Chloride influx into the postsynaptic neuron following GABAAR opening decreases the neuron ability to generate a new action potential, thereby reducing nerve transmission. GABAARs containing alpha-1 and beta-2 or -3 subunits exhibit synaptogenic activity; the gamma-2 subunit being necessary but not sufficient to induce rapid synaptic contacts formation. Extrasynaptic beta-2 receptors contribute to the tonic GABAergic inhibition. Beta-containing GABAARs can simultaneously bind GABA and histamine where histamine binds at the interface of two neighboring beta subunits, which may be involved in the regulation of sleep and wakefulness. The polypeptide is Gamma-aminobutyric acid receptor subunit beta-2 (Mus musculus (Mouse)).